The following is a 590-amino-acid chain: uncharacterized protein (590 aa).

Over 1-68 (MKFSKPKFSM…SQRVWGPWNY (68 aa)) the chain is Cytoplasmic. The helical transmembrane segment at 69–89 (VAFWLADSVNVNTWMIAGTAV) threads the bilayer. Residues 90-94 (ESGLS) are Extracellular-facing. Residues 95–115 (WWEAWITVWVGYTIAAFILTI) traverse the membrane as a helical segment. At 116 to 124 (AGRAGAVYH) the chain is on the cytoplasmic side. The helical transmembrane segment at 125-145 (ISFPVLSRSSFGIWGSLWPIL) threads the bilayer. The Extracellular segment spans residues 146–149 (NRAV). A helical membrane pass occupies residues 150 to 170 (MACVWYGVQAWIGGECVTLMI). Residues 171 to 194 (RSIWPSFSHIPNTMAKSGTETYQW) lie on the Cytoplasmic side of the membrane. A helical transmembrane segment spans residues 195–215 (VGFFIFWLISNVAIWFPVYQI). Residues 216–218 (RHL) are Extracellular-facing. A helical membrane pass occupies residues 219–239 (FTAKSFLAPPAAIAFLIWALV). The Cytoplasmic segment spans residues 240 to 258 (KAHGAGDAIHAKTQLSTWN). A helical transmembrane segment spans residues 259-279 (HGWAVTAGIISCLDNFATLIV). Over 280–298 (NNPDFTRFATTPNAPIFPQ) the chain is Extracellular. A helical transmembrane segment spans residues 299–319 (LITIPMGFGITTLIGVLVGSA). At 320–390 (SKSIYGENIW…LCPMFINIRR (71 aa)) the chain is on the cytoplasmic side. A helical transmembrane segment spans residues 391 to 411 (GGYIASIIGICMCPWNLLSSS). The Extracellular portion of the chain corresponds to 412–418 (NSFANSL). The helical transmembrane segment at 419–439 (SAYAVFLSSFAGILIADYFVI) threads the bilayer. Over 440-467 (RKGYLKVDALYTINPNEPYWFTYGINLR) the chain is Cytoplasmic. A helical membrane pass occupies residues 468–488 (AFASYICGLLINVVGLAGAVG). At 489-500 (DKVPKAALTMNN) the chain is on the extracellular side. The chain crosses the membrane as a helical span at residues 501-521 (IAYLLGIVTSFLSHLIICKIF). Residues 522–590 (PVTACGEKFL…GIDIKESSVF (69 aa)) lie on the Cytoplasmic side of the membrane. Residues 566-590 (VSYDSKEKSDDGKSGGIDIKESSVF) form a disordered region.

It belongs to the purine-cytosine permease (2.A.39) family.

It localises to the cytoplasm. It is found in the nucleus. Its subcellular location is the membrane. This is an uncharacterized protein from Schizosaccharomyces pombe (strain 972 / ATCC 24843) (Fission yeast).